The chain runs to 244 residues: 3-deoxy-manno-octulosonate cytidylyltransferase (244 aa).

Belongs to the KdsB family.

It is found in the cytoplasm. It catalyses the reaction 3-deoxy-alpha-D-manno-oct-2-ulosonate + CTP = CMP-3-deoxy-beta-D-manno-octulosonate + diphosphate. It participates in nucleotide-sugar biosynthesis; CMP-3-deoxy-D-manno-octulosonate biosynthesis; CMP-3-deoxy-D-manno-octulosonate from 3-deoxy-D-manno-octulosonate and CTP: step 1/1. Its pathway is bacterial outer membrane biogenesis; lipopolysaccharide biosynthesis. Activates KDO (a required 8-carbon sugar) for incorporation into bacterial lipopolysaccharide in Gram-negative bacteria. The chain is 3-deoxy-manno-octulosonate cytidylyltransferase from Wolinella succinogenes (strain ATCC 29543 / DSM 1740 / CCUG 13145 / JCM 31913 / LMG 7466 / NCTC 11488 / FDC 602W) (Vibrio succinogenes).